We begin with the raw amino-acid sequence, 306 residues long: Grixazone synthase (306 aa).

Cu(2+) is bound by residues His-39, His-58, His-67, His-222, His-226, and His-248.

It belongs to the tyrosinase family. The cofactor is Cu(2+).

The catalysed reaction is 2 3-amino-4-hydroxybenzoate + N-acetyl-L-cysteine + 2 O2 + H(+) = grixazone B + CO2 + 4 H2O. The enzyme catalyses 2 3-amino-4-hydroxybenzaldehyde + N-acetyl-L-cysteine + 2 O2 = grixazone A + formate + 3 H2O + H(+). It carries out the reaction 4 2-aminophenol + 3 O2 = 2 2-aminophenoxazin-3-one + 6 H2O. With respect to regulation, inhibited by 3-amino-4-hydroxybenzensulfonic acid, 4-hydroxy-3-nitrobenzaldehyde, L-tyrosine, p-hydroxybenzaldehyde. Activated by the copper chaperone GriE. Its function is as follows. Involved in the biosynthesis of the parasiticide antibiotic grixazone. Catalyzes the oxidation of 3-amino-4-hydroxybenzoate (3,4-AHBOA) to yield the corresponding quinone imine which is then non-enzymatically conjugated with the thiol group of N-acetylcysteine. The resultant compound is oxidized to its quinone imine enzymatically and is then dimerized non-enzymatically with another quinone imine oxidized by GriF to yield grixazone B. 3-amino-4-hydroxybenzaldehyde (3,4-AHBAL) can also be used as substrate to yield grixazone A. In the grixazone biosynthetic pathway, it can also function as an o-aminophenol oxidase that catalyzes the formation of the phenoxazinone chromophore from alpha-aminophenol. It can also use 2-amino-4-methylphenol, and to a lesser extent, 3,4-dihydroxybenzaldehyde, catechol and 3,4-dihydroxy-L-phenylalanine (L-DOPA) as substrates. In contrast to tyrosinases, it does not display monophenolase activity. This is Grixazone synthase from Streptomyces griseus subsp. griseus (strain JCM 4626 / CBS 651.72 / NBRC 13350 / KCC S-0626 / ISP 5235).